Reading from the N-terminus, the 528-residue chain is Beta-galactoside alpha-2,6-sialyltransferase 2 (528 aa).

The Cytoplasmic portion of the chain corresponds to Met-1–Gln-10. The helical; Signal-anchor for type II membrane protein transmembrane segment at Leu-11–Thr-31 threads the bilayer. Topologically, residues Asp-32–Leu-528 are lumenal. 3 N-linked (GlcNAc...) asparagine glycosylation sites follow: Asn-167, Asn-308, and Asn-338. Disulfide bonds link Cys-254/Cys-519, Cys-297/Cys-448, and Cys-466/Cys-477.

This sequence belongs to the glycosyltransferase 29 family.

The protein resides in the golgi apparatus. The protein localises to the golgi stack membrane. The enzyme catalyses a beta-D-galactoside + CMP-N-acetyl-beta-neuraminate = an N-acetyl-alpha-neuraminyl-(2-&gt;6)-beta-D-galactosyl derivative + CMP + H(+). Transfers sialic acid from the donor of substrate CMP-sialic acid to galactose containing acceptor substrates. The protein is Beta-galactoside alpha-2,6-sialyltransferase 2 (ST6GAL2) of Gallus gallus (Chicken).